The chain runs to 877 residues: EF-hand domain-containing family member B (877 aa).

Disordered regions lie at residues 1-47 and 268-290; these read MCSF…GRKS and AQQPEEQREAENTEPGVEPPDRI. 2 consecutive EF-hand domains span residues 605–640 and 641–676; these read QNFDTLLAAFRHYDKKGDGVIDRAELQEACDQACLH and LDEKLLDQLFEYCDVDKDGLINYLEFANFLTWKDKT. Residues Asp-618, Asp-622, Glu-629, Asp-654, Asp-656, Asp-658, and Glu-665 each coordinate Ca(2+).

In terms of assembly, microtubule inner protein component of sperm flagellar doublet microtubules. Interacts with STIM1 and ORAI1; the interactions take place upon Ca(2+)-store depletion and dissociate through a Ca(2+)-dependent mechanism. Interaction with STIM1 inhibits STIM1 interaction with SARAF. As to expression, expressed in trachea multiciliated cells.

It is found in the cytoplasm. The protein localises to the cytoskeleton. It localises to the cilium axoneme. The protein resides in the flagellum axoneme. Functionally, microtubule inner protein (MIP) part of the dynein-decorated doublet microtubules (DMTs) in cilia axoneme, which is required for motile cilia beating. Cytosolic sensor for calcium, modulates the interaction of STIM1 and ORAI1 upon store depletion and the activation of store-operated Ca(2+) entry (SOCE) and NFAT translocation from cytosol to nucleus. In Bos taurus (Bovine), this protein is EF-hand domain-containing family member B.